The following is a 446-amino-acid chain: Golgi reassembly-stacking protein 1 (446 aa).

Residues 1-20 (MGLGASSEQPAGGEGFHLHG) form a disordered region. Glycine 2 is lipidated: N-myristoyl glycine. 2 PDZ GRASP-type domains span residues 14-104 (EGFH…FCSF) and 110-198 (HVWH…YGYL). Positions 14-214 (EGFHLHGVQE…PSSQHKKPPG (201 aa)) are GRASP. Positions 17, 19, and 102 each coordinate Zn(2+). Positions 189 to 201 (LGCGIGYGYLHRI) are essential for interaction with GOLGA2/GM130. Disordered stretches follow at residues 202–252 (PTQP…LGSR) and 343–446 (VSGP…EPGL). Phosphothreonine occurs at positions 216, 220, and 224. Residues 343-354 (VSGPEDIGSSSS) are compositionally biased toward low complexity. Phosphoserine is present on residues serine 365, serine 367, and serine 376.

Belongs to the GORASP family. As to quaternary structure, homodimer. Forms higher-order oligomers under interphase but not mitotic conditions. Dimers of the protein on one membrane might be able to interact with dimers on another and so stack cisternae. Interacts with the C-terminus of GOLGA2/GM130 under both mitotic and non-mitotic conditions. The interaction is critical for the correct targeting of both proteins to the cis-Golgi. Interacts with TMED2 and TMED3. Post-translationally, phosphorylated by CDC2/B1 and PLK kinases during mitosis. Phosphorylation cycle correlates with the cisternal stacking cycle. Phosphorylation of the homodimer prevents the association of dimers into higher-order oligomers, leading to cisternal unstacking. Target for caspase-3 cleavage during apoptosis. The cleavage contributes to Golgi fragmentation and occurs very early in the execution phase of apoptosis. In terms of processing, myristoylated.

It localises to the golgi apparatus. The protein localises to the cis-Golgi network membrane. Its function is as follows. Key structural protein of the Golgi apparatus. The membrane cisternae of the Golgi apparatus adhere to each other to form stacks, which are aligned side by side to form the Golgi ribbon. Acting in concert with GORASP2/GRASP55, is required for the formation and maintenance of the Golgi ribbon, and may be dispensable for the formation of stacks. However, other studies suggest that GORASP1 plays an important role in assembly and membrane stacking of the cisternae, and in the reassembly of Golgi stacks after breakdown during mitosis. Caspase-mediated cleavage of GORASP1 is required for fragmentation of the Golgi during apoptosis. Also mediates, via its interaction with GOLGA2/GM130, the docking of transport vesicles with the Golgi membranes. Mediates ER stress-induced unconventional (ER/Golgi-independent) trafficking of core-glycosylated CFTR to cell membrane. This Mus musculus (Mouse) protein is Golgi reassembly-stacking protein 1 (Gorasp1).